Here is a 168-residue protein sequence, read N- to C-terminus: MVDDSTRKTLSSIPLLQIRAGPREKDIWVQRLKEEYQALIKACTYVENNKQSGSDWFRLESNKEGTKWFGKCWYMHNLLKYEFDVEFDIPVTYPTTAPEIALPELDGKTAKMYRGGKICLTDHFKPLWARNVPKFGIAHAMALGLAPWLAVEVPDLIEKGVIAYKDNC.

Catalysis depends on C119, which acts as the Glycyl thioester intermediate.

Belongs to the ubiquitin-conjugating enzyme family. UFC1 subfamily.

E2-like enzyme which forms an intermediate with UFM1 via a thioester linkage. The chain is Ubiquitin-fold modifier-conjugating enzyme 1 from Drosophila grimshawi (Hawaiian fruit fly).